A 241-amino-acid chain; its full sequence is Superantigen-like protein 13 (241 aa).

The signal sequence occupies residues 1 to 26 (MNNNITKKIILSTTLLLLGTASTQFP).

This sequence belongs to the staphylococcal/streptococcal toxin family. Interacts with host FPR2; this interaction promotes neutrophil chemotaxis.

Its function is as follows. Acts as a pathogen alarming molecule by acting on host neutrophil chemotactic factors FPR2. Plays a role of chemoattractant and induces degranulation and oxidative burst in neutrophils. The sequence is that of Superantigen-like protein 13 from Staphylococcus aureus (strain Newman).